A 70-amino-acid chain; its full sequence is Conotoxin ba3a (70 aa).

The N-terminal stretch at 1–20 (MLKIGVMLSIILVLFPLATL) is a signal peptide. A propeptide spanning residues 21 to 55 (QLVAERPAAERYAENKQDLNPDERRNYLVDLGVER) is cleaved from the precursor.

As to expression, expressed by the venom duct.

Its subcellular location is the secreted. This Conus bayani (Bayan's cone) protein is Conotoxin ba3a.